Consider the following 117-residue polypeptide: Small ribosomal subunit protein uS17 (117 aa).

The interval 97–117 (AEGLAAAHAGEPETESAATDA) is disordered.

It belongs to the universal ribosomal protein uS17 family. As to quaternary structure, part of the 30S ribosomal subunit.

One of the primary rRNA binding proteins, it binds specifically to the 5'-end of 16S ribosomal RNA. The sequence is that of Small ribosomal subunit protein uS17 from Rhodopirellula baltica (strain DSM 10527 / NCIMB 13988 / SH1).